The chain runs to 624 residues: Chromosomal replication initiator protein DnaA (624 aa).

Residues methionine 1–alanine 99 are domain I, interacts with DnaA modulators. A disordered region spans residues aspartate 88–arginine 284. A domain II region spans residues proline 100–alanine 283. The segment covering methionine 102–histidine 112 has biased composition (low complexity). 2 stretches are compositionally biased toward basic and acidic residues: residues glutamine 118–proline 141 and glycine 176–alanine 206. Gly residues predominate over residues proline 250 to valine 264. The domain III, AAA+ region stretch occupies residues arginine 284 to alanine 500. The ATP site is built by glycine 328, glycine 330, lysine 331, and threonine 332. The interval serine 501–glycine 624 is domain IV, binds dsDNA.

It belongs to the DnaA family. In terms of assembly, oligomerizes as a right-handed, spiral filament on DNA at oriC.

It is found in the cytoplasm. In terms of biological role, plays an essential role in the initiation and regulation of chromosomal replication. ATP-DnaA binds to the origin of replication (oriC) to initiate formation of the DNA replication initiation complex once per cell cycle. Binds the DnaA box (a 9 base pair repeat at the origin) and separates the double-stranded (ds)DNA. Forms a right-handed helical filament on oriC DNA; dsDNA binds to the exterior of the filament while single-stranded (ss)DNA is stabiized in the filament's interior. The ATP-DnaA-oriC complex binds and stabilizes one strand of the AT-rich DNA unwinding element (DUE), permitting loading of DNA polymerase. After initiation quickly degrades to an ADP-DnaA complex that is not apt for DNA replication. Binds acidic phospholipids. Functionally, the DnaA box consensus is 5'-(T/C)(T/C)(G/AC)TCCACA-3'. This chain is Chromosomal replication initiator protein DnaA, found in Streptomyces anulatus (Streptomyces chrysomallus).